The sequence spans 119 residues: Large ribosomal subunit protein uL18 (119 aa).

This sequence belongs to the universal ribosomal protein uL18 family. As to quaternary structure, part of the 50S ribosomal subunit; part of the 5S rRNA/L5/L18/L25 subcomplex. Contacts the 5S and 23S rRNAs.

Its function is as follows. This is one of the proteins that bind and probably mediate the attachment of the 5S RNA into the large ribosomal subunit, where it forms part of the central protuberance. In Sorangium cellulosum (strain So ce56) (Polyangium cellulosum (strain So ce56)), this protein is Large ribosomal subunit protein uL18.